The sequence spans 177 residues: Ureidoglycolate lyase (177 aa).

This sequence belongs to the ureidoglycolate lyase family. In terms of assembly, homodimer. The cofactor is Ni(2+).

It carries out the reaction (S)-ureidoglycolate = urea + glyoxylate. It participates in nitrogen metabolism; (S)-allantoin degradation. Catalyzes the catabolism of the allantoin degradation intermediate (S)-ureidoglycolate, generating urea and glyoxylate. Involved in the utilization of allantoin as nitrogen source. This Burkholderia cepacia (Pseudomonas cepacia) protein is Ureidoglycolate lyase.